Reading from the N-terminus, the 458-residue chain is Ammonium transporter Rh type B (458 aa).

The Cytoplasmic segment spans residues Met-1–Leu-13. The helical transmembrane segment at Leu-14–Val-34 threads the bilayer. The Extracellular segment spans residues Arg-35–Tyr-61. N-linked (GlcNAc...) asparagine glycosylation occurs at Asn-49. Residues Pro-62 to Leu-82 traverse the membrane as a helical segment. The Cytoplasmic portion of the chain corresponds to Gln-83–Gly-86. Residues Tyr-87–Val-107 form a helical membrane-spanning segment. Residues Gln-108–Glu-124 are Extracellular-facing. Residues Ser-125–Gly-145 form a helical membrane-spanning segment. Over Lys-146–Pro-149 the chain is Cytoplasmic. The chain crosses the membrane as a helical span at residues Ala-150–Leu-170. Residues Leu-171–Asp-178 lie on the Extracellular side of the membrane. A helical transmembrane segment spans residues Ala-179–Tyr-201. At Arg-202–Asp-219 the chain is on the cytoplasmic side. The helical transmembrane segment at Leu-220–Leu-240 threads the bilayer. The Extracellular portion of the chain corresponds to Thr-241–Ala-251. Residues Leu-252 to Val-272 form a helical membrane-spanning segment. Topologically, residues Gly-273–His-282 are cytoplasmic. A helical transmembrane segment spans residues Val-283–Thr-303. Pro-304 is a topological domain (extracellular). Residues Phe-305 to Phe-325 form a helical membrane-spanning segment. Topologically, residues Thr-326 to Gly-346 are cytoplasmic. A helical membrane pass occupies residues Met-347–Ala-367. The Extracellular portion of the chain corresponds to Tyr-368–Gln-393. A helical transmembrane segment spans residues Leu-394–Leu-414. The Cytoplasmic portion of the chain corresponds to Leu-415–Ala-458. The segment at Lys-416 to Pro-424 is interaction with ANK3. A Basolateral sorting signal motif is present at residues Tyr-429–Gln-432.

The protein belongs to the ammonium transporter (TC 2.A.49) family. Rh subfamily. Interacts (via C-terminus) with ANK2 and ANK3; required for targeting to the basolateral membrane. Post-translationally, N-glycosylated.

It localises to the cell membrane. The protein localises to the basolateral cell membrane. The catalysed reaction is NH4(+)(in) = NH4(+)(out). The enzyme catalyses methylamine(out) = methylamine(in). It carries out the reaction CO2(out) = CO2(in). Ammonium transporter involved in the maintenance of acid-base homeostasis. Transports ammonium and its related derivative methylammonium across the basolateral plasma membrane of epithelial cells likely contributing to renal transepithelial ammonia transport and ammonia metabolism. May transport either NH4(+) or NH3 ammonia species predominantly mediating an electrogenic NH4(+) transport. May act as a CO2 channel providing for renal acid secretion. The polypeptide is Ammonium transporter Rh type B (RHBG) (Oryctolagus cuniculus (Rabbit)).